The following is a 293-amino-acid chain: DNA repair protein RecO (293 aa).

The protein belongs to the RecO family.

Involved in DNA repair and RecF pathway recombination. In Acaryochloris marina (strain MBIC 11017), this protein is DNA repair protein RecO.